We begin with the raw amino-acid sequence, 307 residues long: Ribonuclease Z (307 aa).

Zn(2+)-binding residues include histidine 63, histidine 65, aspartate 67, histidine 68, histidine 141, aspartate 212, and histidine 270. The active-site Proton acceptor is aspartate 67.

It belongs to the RNase Z family. Homodimer. Requires Zn(2+) as cofactor.

The enzyme catalyses Endonucleolytic cleavage of RNA, removing extra 3' nucleotides from tRNA precursor, generating 3' termini of tRNAs. A 3'-hydroxy group is left at the tRNA terminus and a 5'-phosphoryl group is left at the trailer molecule.. Zinc phosphodiesterase, which displays some tRNA 3'-processing endonuclease activity. Probably involved in tRNA maturation, by removing a 3'-trailer from precursor tRNA. The sequence is that of Ribonuclease Z from Bacillus cereus (strain G9842).